The chain runs to 559 residues: NXPE family member 3 (559 aa).

The signal sequence occupies residues 1–30 (MWTNFFKLRLFCCLLAVLMVVVLVVNVTQV). Residues asparagine 26, asparagine 237, and asparagine 346 are each glycosylated (N-linked (GlcNAc...) asparagine).

Belongs to the NXPE family.

It localises to the secreted. The chain is NXPE family member 3 (NXPE3) from Pongo abelii (Sumatran orangutan).